Reading from the N-terminus, the 488-residue chain is Probable glycine dehydrogenase (decarboxylating) subunit 2 (488 aa).

The residue at position 274 (K274) is an N6-(pyridoxal phosphate)lysine.

Belongs to the GcvP family. C-terminal subunit subfamily. In terms of assembly, the glycine cleavage system is composed of four proteins: P, T, L and H. In this organism, the P 'protein' is a heterodimer of two subunits. Pyridoxal 5'-phosphate serves as cofactor.

The enzyme catalyses N(6)-[(R)-lipoyl]-L-lysyl-[glycine-cleavage complex H protein] + glycine + H(+) = N(6)-[(R)-S(8)-aminomethyldihydrolipoyl]-L-lysyl-[glycine-cleavage complex H protein] + CO2. Functionally, the glycine cleavage system catalyzes the degradation of glycine. The P protein binds the alpha-amino group of glycine through its pyridoxal phosphate cofactor; CO(2) is released and the remaining methylamine moiety is then transferred to the lipoamide cofactor of the H protein. This chain is Probable glycine dehydrogenase (decarboxylating) subunit 2, found in Listeria monocytogenes serovar 1/2a (strain ATCC BAA-679 / EGD-e).